Here is a 517-residue protein sequence, read N- to C-terminus: Dermokine (517 aa).

The N-terminal stretch at 1–21 (MKLQGSLACLLLALCLGGGAA) is a signal peptide. 2 disordered regions span residues 51 to 83 (VGQG…MGSR) and 123 to 364 (AGSW…IQKE). Composition is skewed to gly residues over residues 127–145 (GTSG…GVQG) and 167–176 (GSVGQGGNGG). The span at 197–206 (RGNNQNSGCT) shows a compositional bias: polar residues. The segment covering 212-235 (GSHESFSNSGGSSNDGSRGSQGSH) has biased composition (low complexity). Positions 236–250 (GSNGQGSSGRGGGQG) are enriched in gly residues. A compositionally biased stretch (low complexity) spans 251-289 (NSDNNGSSSSSSGSNSGNSNSGNSGNSNSGNSGNSGSGS). Composition is skewed to gly residues over residues 308–332 (GSRG…GGGN) and 347–358 (GGSGSQGHGSNG).

The protein belongs to the dermokine family. In terms of assembly, homooligomer. Seems to be able to homodimerize and homotrimerize. O-glycosylated. As to expression, highly expressed in stratified epithelia; such as the skin, tongue, esophagus, forestomach and vagina. Also found in lung, trachea and urinary bladder.

The protein localises to the secreted. Its function is as follows. May act as a soluble regulator of keratinocyte differentiation. The chain is Dermokine (Dmkn) from Mus musculus (Mouse).